The chain runs to 431 residues: Serine/threonine-protein kinase SSN3 (431 aa).

The Protein kinase domain maps to 27–355 (YQIIGYIAAG…ADNALVHPYF (329 aa)). ATP contacts are provided by residues 33 to 41 (IAAGTYGKV) and Lys59. The active-site Proton acceptor is the Asp174. The tract at residues 397–431 (RHGGAYDDQHNNSNNNTNNSLNANNANNVPRKRAR) is disordered. Over residues 407–424 (NNSNNNTNNSLNANNANN) the composition is skewed to low complexity.

It belongs to the protein kinase superfamily. CMGC Ser/Thr protein kinase family. CDC2/CDKX subfamily. As to quaternary structure, component of the srb8-11 complex, a regulatory module of the Mediator complex. Mg(2+) serves as cofactor.

It localises to the nucleus. It carries out the reaction L-seryl-[protein] + ATP = O-phospho-L-seryl-[protein] + ADP + H(+). It catalyses the reaction L-threonyl-[protein] + ATP = O-phospho-L-threonyl-[protein] + ADP + H(+). The enzyme catalyses [DNA-directed RNA polymerase] + ATP = phospho-[DNA-directed RNA polymerase] + ADP + H(+). Its function is as follows. Component of the srb8-11 complex. The srb8-11 complex is a regulatory module of the Mediator complex which is itself dependent transcription. The srb8-11 complex may be involved in the transcriptional repression of a subset of genes regulated by Mediator. It may inhibit the association of the Mediator complex with RNA polymerase II to form the holoenzyme complex. The srb8-11 complex phosphorylates the C-terminal domain (CTD) of the largest subunit of RNA polymerase II. This is Serine/threonine-protein kinase SSN3 (SSN3) from Scheffersomyces stipitis (strain ATCC 58785 / CBS 6054 / NBRC 10063 / NRRL Y-11545) (Yeast).